The sequence spans 225 residues: UPF0758 protein NMC1174 (225 aa).

The region spanning 102–224 (VLSDPDTVAD…VRSFRQLGLM (123 aa)) is the MPN domain. The Zn(2+) site is built by His173, His175, and Asp186. The JAMM motif motif lies at 173–186 (HNHPGGSPEPSQED).

This sequence belongs to the UPF0758 family.

In Neisseria meningitidis serogroup C / serotype 2a (strain ATCC 700532 / DSM 15464 / FAM18), this protein is UPF0758 protein NMC1174.